A 323-amino-acid chain; its full sequence is Glutamyl-Q tRNA(Asp) synthetase (323 aa).

L-glutamate-binding positions include 5–9 (RFAPT) and Glu41. Residues 8 to 18 (PTPSGALHLGN) carry the 'HIGH' region motif. Residues Cys105, Cys107, Tyr129, and Cys133 each contribute to the Zn(2+) site. Tyr193 and Arg211 together coordinate L-glutamate. Positions 249-253 (RLAKR) match the 'KMSKS' region motif. Position 252 (Lys252) interacts with ATP.

It belongs to the class-I aminoacyl-tRNA synthetase family. GluQ subfamily. Zn(2+) serves as cofactor.

Functionally, catalyzes the tRNA-independent activation of glutamate in presence of ATP and the subsequent transfer of glutamate onto a tRNA(Asp). Glutamate is transferred on the 2-amino-5-(4,5-dihydroxy-2-cyclopenten-1-yl) moiety of the queuosine in the wobble position of the QUC anticodon. This chain is Glutamyl-Q tRNA(Asp) synthetase, found in Symbiobacterium thermophilum (strain DSM 24528 / JCM 14929 / IAM 14863 / T).